The chain runs to 460 residues: ATP synthase subunit beta (460 aa).

Residue 150–157 (GGAGVGKT) coordinates ATP.

It belongs to the ATPase alpha/beta chains family. F-type ATPases have 2 components, CF(1) - the catalytic core - and CF(0) - the membrane proton channel. CF(1) has five subunits: alpha(3), beta(3), gamma(1), delta(1), epsilon(1). CF(0) has three main subunits: a(1), b(2) and c(9-12). The alpha and beta chains form an alternating ring which encloses part of the gamma chain. CF(1) is attached to CF(0) by a central stalk formed by the gamma and epsilon chains, while a peripheral stalk is formed by the delta and b chains.

Its subcellular location is the cell inner membrane. It catalyses the reaction ATP + H2O + 4 H(+)(in) = ADP + phosphate + 5 H(+)(out). In terms of biological role, produces ATP from ADP in the presence of a proton gradient across the membrane. The catalytic sites are hosted primarily by the beta subunits. The polypeptide is ATP synthase subunit beta (Erwinia tasmaniensis (strain DSM 17950 / CFBP 7177 / CIP 109463 / NCPPB 4357 / Et1/99)).